Here is a 279-residue protein sequence, read N- to C-terminus: MKVISSIQELRDQLRGQNRTAFVPTMGNLHEGHLSLMRLARQHGDPVVASIFVNRLQFGPNEDFDKYPRTLQDDIEKLQNENVYVLFAPTERDMYPEPQEYRVLPPDDLGGILEGEFRPGFFAGVCTVVTKLMSCVQPRVAVFGKKDYQQLMIVRRMCQQLALPVEIIAAETVRDEDGLALSSRNRYLTADERTEAPELVKTLQRVRESVLGGERDLGKLEQHARAHLAERGWAPDYIAIRRRANLIAPSAAELEAGEPLVVLAAAKLGATRLIDNLEI.

26-33 (MGNLHEGH) contacts ATP. Histidine 33 serves as the catalytic Proton donor. Glutamine 57 is a (R)-pantoate binding site. Glutamine 57 provides a ligand contact to beta-alanine. 144–147 (GKKD) contacts ATP. Glutamine 150 lines the (R)-pantoate pocket. ATP-binding positions include valine 173 and 181–184 (LSSR).

This sequence belongs to the pantothenate synthetase family. In terms of assembly, homodimer.

It is found in the cytoplasm. The catalysed reaction is (R)-pantoate + beta-alanine + ATP = (R)-pantothenate + AMP + diphosphate + H(+). It functions in the pathway cofactor biosynthesis; (R)-pantothenate biosynthesis; (R)-pantothenate from (R)-pantoate and beta-alanine: step 1/1. Its function is as follows. Catalyzes the condensation of pantoate with beta-alanine in an ATP-dependent reaction via a pantoyl-adenylate intermediate. The sequence is that of Pantothenate synthetase from Burkholderia vietnamiensis (strain G4 / LMG 22486) (Burkholderia cepacia (strain R1808)).